The following is a 313-amino-acid chain: Dehydrogenase/reductase SDR family member 1 (313 aa).

At Ala-2 the chain carries N-acetylalanine. Ile-19 lines the NAD(+) pocket. Position 21 is an omega-N-methylarginine (Arg-21). Residue Asp-64 coordinates NAD(+). Residue Ser-151 coordinates substrate. NAD(+) contacts are provided by Tyr-163, Lys-167, and Thr-198. Tyr-163 functions as the Proton acceptor in the catalytic mechanism. Residues 235–313 (CVVALATDPN…WIIALYTSKF (79 aa)) are required for ER localization.

The protein belongs to the short-chain dehydrogenases/reductases (SDR) family. In terms of tissue distribution, detected in heart, liver, adrenal glands, and at low levels in skeletal muscle, kidney, pancreas and brain.

Its subcellular location is the endoplasmic reticulum. It carries out the reaction 17alpha-estradiol + NADP(+) = estrone + NADPH + H(+). It catalyses the reaction testosterone + NADP(+) = androst-4-ene-3,17-dione + NADPH + H(+). The enzyme catalyses prostaglandin E1 + NADPH + H(+) = prostaglandin F1 + NADP(+). The catalysed reaction is isatin + NADPH + H(+) = 3-hydroxyindolin-2-one + NADP(+). Its function is as follows. NADPH-dependent oxidoreductase which catalyzes the reduction of steroids (estrone, androstene-3,17-dione and cortisone) as well as prostaglandin E1, isatin and xenobiotics in vitro. May have a role in steroid and/or xenobiotic metabolism. This Homo sapiens (Human) protein is Dehydrogenase/reductase SDR family member 1.